The following is an 89-amino-acid chain: Small ribosomal subunit protein uS15 (89 aa).

Belongs to the universal ribosomal protein uS15 family. Part of the 30S ribosomal subunit. Forms a bridge to the 50S subunit in the 70S ribosome, contacting the 23S rRNA.

In terms of biological role, one of the primary rRNA binding proteins, it binds directly to 16S rRNA where it helps nucleate assembly of the platform of the 30S subunit by binding and bridging several RNA helices of the 16S rRNA. Forms an intersubunit bridge (bridge B4) with the 23S rRNA of the 50S subunit in the ribosome. The chain is Small ribosomal subunit protein uS15 from Yersinia enterocolitica serotype O:8 / biotype 1B (strain NCTC 13174 / 8081).